A 160-amino-acid chain; its full sequence is MASHKWLLQMIVFLKTITIAYCLHLQDDTPLFFGAKPLSDVSLIITEPCVSSVYEAWDYAAPPVSNLSEALSGIVVKTKCPVPEVILWFKDKQMAYWTNPYVTLKGLTQSVGEEHKSGDIRDALLDALSGVWVDSTPSSTNIPENGCVWGADRLFQRVCQ.

A signal peptide spans Met1–Cys22. The interaction with gH stretch occupies residues His24–Trp149. Positions Asp28–Gln160 constitute a gL alphaherpesvirus-type domain. 2 disulfides stabilise this stretch: Cys49/Cys80 and Cys147/Cys159.

This sequence belongs to the herpesviridae glycoprotein L (gL) family. Alphaherpesvirinae gL subfamily. In terms of assembly, interacts with glycoprotein H (gH); this interaction is necessary for the correct processing and cell surface expression of gH. The heterodimer gH/gL seems to interact with gB trimers during fusion.

It is found in the virion membrane. Its subcellular location is the host cell membrane. The protein resides in the host Golgi apparatus. The protein localises to the host trans-Golgi network. The heterodimer glycoprotein H-glycoprotein L is required for the fusion of viral and plasma membranes leading to virus entry into the host cell. Acts as a functional inhibitor of gH and maintains gH in an inhibited form. Upon binding to host integrins, gL dissociates from gH leading to activation of the viral fusion glycoproteins gB and gH. This Varicella-zoster virus (strain Oka vaccine) (HHV-3) protein is Envelope glycoprotein L.